A 456-amino-acid chain; its full sequence is CCA-adding enzyme (456 aa).

ATP contacts are provided by Ser53 and Lys56. Residues Ser53 and Lys56 each contribute to the CTP site. Residues Asp65, Asp67, and Asp119 each contribute to the Mg(2+) site. Residues His142, Lys161, and Tyr170 each contribute to the ATP site. CTP-binding residues include His142, Lys161, and Tyr170.

This sequence belongs to the tRNA nucleotidyltransferase/poly(A) polymerase family. Archaeal CCA-adding enzyme subfamily. As to quaternary structure, homodimer. Requires Mg(2+) as cofactor.

The enzyme catalyses a tRNA precursor + 2 CTP + ATP = a tRNA with a 3' CCA end + 3 diphosphate. It carries out the reaction a tRNA with a 3' CCA end + 2 CTP + ATP = a tRNA with a 3' CCACCA end + 3 diphosphate. Its function is as follows. Catalyzes the addition and repair of the essential 3'-terminal CCA sequence in tRNAs without using a nucleic acid template. Adds these three nucleotides in the order of C, C, and A to the tRNA nucleotide-73, using CTP and ATP as substrates and producing inorganic pyrophosphate. tRNA 3'-terminal CCA addition is required both for tRNA processing and repair. Also involved in tRNA surveillance by mediating tandem CCA addition to generate a CCACCA at the 3' terminus of unstable tRNAs. While stable tRNAs receive only 3'-terminal CCA, unstable tRNAs are marked with CCACCA and rapidly degraded. The sequence is that of CCA-adding enzyme from Thermococcus kodakarensis (strain ATCC BAA-918 / JCM 12380 / KOD1) (Pyrococcus kodakaraensis (strain KOD1)).